A 313-amino-acid chain; its full sequence is Mitochondrial uncoupling protein 4 (313 aa).

Solcar repeat units lie at residues lysine 4 to lysine 115, leucine 124 to glycine 215, and aspartate 224 to leucine 309. Helical transmembrane passes span phenylalanine 6–isoleucine 26, alanine 84–threonine 104, isoleucine 130–alanine 150, arginine 189–tyrosine 209, valine 230–isoleucine 250, and tyrosine 282–threonine 302.

Belongs to the mitochondrial carrier (TC 2.A.29) family. In terms of tissue distribution, expressed in roots, leaves, stems and flowers.

It is found in the mitochondrion inner membrane. Functionally, PUMPS are mitochondrial transporter proteins that create proton leaks across the inner mitochondrial membrane, thus uncoupling oxidative phosphorylation. This leads to a decrease in the efficiency of oxidative phosphorylation and an increase in heat production. May be involved in protecting plant cells against oxidative stress damage. Recombinant PUMP4, reconstituted into liposomes, transports a wide range of dicarboxylic acids including malate, oxaloacetate and succinate as well as phosphate, sulfate and thiosulfate. However, it is unknown if these transports are of any biological significance in vivo. This chain is Mitochondrial uncoupling protein 4 (PUMP4), found in Arabidopsis thaliana (Mouse-ear cress).